A 96-amino-acid polypeptide reads, in one-letter code: MNLRPLHDRVIVKRLDNETKTASGIVIPDAAAEKPDQGEVLAIGPGKKDDKGNPIALDVKVGDRVLFGKYAGQAVKVDGQELLVMREEDIMAVVTK.

The protein belongs to the GroES chaperonin family. Heptamer of 7 subunits arranged in a ring. Interacts with the chaperonin GroEL.

It is found in the cytoplasm. In terms of biological role, together with the chaperonin GroEL, plays an essential role in assisting protein folding. The GroEL-GroES system forms a nano-cage that allows encapsulation of the non-native substrate proteins and provides a physical environment optimized to promote and accelerate protein folding. GroES binds to the apical surface of the GroEL ring, thereby capping the opening of the GroEL channel. The polypeptide is Co-chaperonin GroES (Ralstonia nicotianae (strain ATCC BAA-1114 / GMI1000) (Ralstonia solanacearum)).